The primary structure comprises 201 residues: Recombination protein RecR (201 aa).

Residues 57 to 72 form a C4-type zinc finger; it reads CADCRTFTEQEHCTIC. A Toprim domain is found at 81 to 176; that stretch reads GQICVVESPA…LASRIAHGVP (96 aa).

Belongs to the RecR family.

May play a role in DNA repair. It seems to be involved in an RecBC-independent recombinational process of DNA repair. It may act with RecF and RecO. This is Recombination protein RecR from Yersinia pestis bv. Antiqua (strain Antiqua).